The chain runs to 361 residues: Peroxidase A (361 aa).

It belongs to the peroxidase family. Partially N-glycosylated.

The protein resides in the secreted. It carries out the reaction 2 a phenolic donor + H2O2 = 2 a phenolic radical donor + 2 H2O. In Aloe vera (Aloe), this protein is Peroxidase A.